Reading from the N-terminus, the 548-residue chain is Membrane protein insertase YidC (548 aa).

A helical transmembrane segment spans residues 6-26 (NLLVIALLFVSFMIWQAWEQD). The tract at residues 28 to 56 (NPQPQTQQTTQTTTTAAGSAADQGVPASG) is disordered. Residues 29 to 42 (PQPQTQQTTQTTTT) show a composition bias toward low complexity. 4 consecutive transmembrane segments (helical) span residues 350 to 370 (FVGN…GIMY), 424 to 444 (FPLI…MGSI), 458 to 478 (LSAQ…MFFI), and 499 to 519 (PVIF…YYIV).

It belongs to the OXA1/ALB3/YidC family. Type 1 subfamily. In terms of assembly, interacts with the Sec translocase complex via SecD. Specifically interacts with transmembrane segments of nascent integral membrane proteins during membrane integration.

The protein localises to the cell inner membrane. Functionally, required for the insertion and/or proper folding and/or complex formation of integral membrane proteins into the membrane. Involved in integration of membrane proteins that insert both dependently and independently of the Sec translocase complex, as well as at least some lipoproteins. Aids folding of multispanning membrane proteins. This is Membrane protein insertase YidC from Salmonella dublin (strain CT_02021853).